The chain runs to 786 residues: MNKKVLKTLEYDKVKQNLYAFTTTSMGKRLIDKLEPSSDYDEISNSLAQTKDGADILRIKGGIPVPNLISIKSFLKRLDIGGTLNSKELAAIGRVLRATNEVNRFFKDLADNKIKLEVLFDDVAKLESLPEISKKLLVSIENDGHVTDDASTLLKSIRQQISVTEETIRERLNAYTRGTNSKYLSNAVVTIRNERYVLPVKQEYRSKFGGIVHDQSSSGQTLFVEPAVIVELNNRLRQQQVAEREEINRILEELSKELAPYTHELNNNAKILGMLDFINAKAKYAHSIKATEPILSKENDVYLRQVWHPLLDMKKAVKNDIMIGKDYQAIVITGPNTGGKTITLKTLGLVQLMGQSGLYIPAFEESRIGIFDDIFADIGDEQSIEQSLSTFSSHMTNIVEILKGIDEKSLVLFDELGAGTDPQEGAALAISILDAVGAKGSYVVATTHYPELKAYGFERPNTINASMEFDANTLQPTYRLLIGIPGRSNAFDISQRLGLDKMIVMAARQLTSQDSQDLNEMISDLVAKRHDAEEKEIMYRKYLREAEELHHDLETNFHQFERQKENMLEQAKERANQIVEETKKKSDELISELRKMKMSAASNIEEGSLIDAQGRVNALHQETNLKKNKVLRKAKQQQELHPNDDVMVNSYGQRGVLLRKAGNHAWEVQLGILKMKIDESDLEKIKVKDTQPKRAGAVLKSSSSSHVSPTLDLRGERYENAMVKVDRYIDAAVLAGYNSVTIIHGKGTGALRTGIINYLKQNKAVKNFEFASPNNGGNGATVVYFK.

334-341 (GPNTGGKT) provides a ligand contact to ATP. The Smr domain maps to 711 to 786 (LDLRGERYEN…GNGATVVYFK (76 aa)).

Belongs to the DNA mismatch repair MutS family. MutS2 subfamily. In terms of assembly, homodimer. Binds to stalled ribosomes, contacting rRNA.

Its function is as follows. Endonuclease that is involved in the suppression of homologous recombination and thus may have a key role in the control of bacterial genetic diversity. In terms of biological role, acts as a ribosome collision sensor, splitting the ribosome into its 2 subunits. Detects stalled/collided 70S ribosomes which it binds and splits by an ATP-hydrolysis driven conformational change. Acts upstream of the ribosome quality control system (RQC), a ribosome-associated complex that mediates the extraction of incompletely synthesized nascent chains from stalled ribosomes and their subsequent degradation. Probably generates substrates for RQC. This is Endonuclease MutS2 from Ligilactobacillus salivarius (strain UCC118) (Lactobacillus salivarius).